The following is a 274-amino-acid chain: Large ribosomal subunit protein uL2 (274 aa).

Residues 1 to 23 are disordered; the sequence is MAIKIYRPTSPGRRHHSVSSFEE.

This sequence belongs to the universal ribosomal protein uL2 family. In terms of assembly, part of the 50S ribosomal subunit. Forms a bridge to the 30S subunit in the 70S ribosome.

In terms of biological role, one of the primary rRNA binding proteins. Required for association of the 30S and 50S subunits to form the 70S ribosome, for tRNA binding and peptide bond formation. It has been suggested to have peptidyltransferase activity; this is somewhat controversial. Makes several contacts with the 16S rRNA in the 70S ribosome. This is Large ribosomal subunit protein uL2 from Dehalococcoides mccartyi (strain ATCC BAA-2100 / JCM 16839 / KCTC 5957 / BAV1).